The following is a 521-amino-acid chain: uncharacterized protein (521 aa).

Positions 14-41 (QFQQMQHQMQQQQQQQMQQQQQQQQQQQ) form a coiled coil. 3 stretches are compositionally biased toward low complexity: residues 238–266 (LSGS…TSSS), 275–353 (SSTS…NNNN), and 423–482 (PRLS…PNNP). 2 disordered regions span residues 238-357 (LSGS…ISGF) and 413-491 (TAVA…SNNG).

This is an uncharacterized protein from Dictyostelium discoideum (Social amoeba).